Consider the following 65-residue polypeptide: Large ribosomal subunit protein bL35 (65 aa).

Residues 1–22 form a disordered region; that stretch reads MPKLKTKSGAAKRFKKTGKGGF.

The protein belongs to the bacterial ribosomal protein bL35 family.

This Francisella philomiragia subsp. philomiragia (strain ATCC 25017 / CCUG 19701 / FSC 153 / O#319-036) protein is Large ribosomal subunit protein bL35.